Reading from the N-terminus, the 372-residue chain is Beta sliding clamp (372 aa).

This sequence belongs to the beta sliding clamp family. In terms of assembly, forms a ring-shaped head-to-tail homodimer around DNA which binds and tethers DNA polymerases and other proteins to the DNA. The DNA replisome complex has a single clamp-loading complex (3 tau and 1 each of delta, delta', psi and chi subunits) which binds 3 Pol III cores (1 core on the leading strand and 2 on the lagging strand) each with a beta sliding clamp dimer. Additional proteins in the replisome are other copies of gamma, psi and chi, Ssb, DNA helicase and RNA primase.

Its subcellular location is the cytoplasm. In terms of biological role, confers DNA tethering and processivity to DNA polymerases and other proteins. Acts as a clamp, forming a ring around DNA (a reaction catalyzed by the clamp-loading complex) which diffuses in an ATP-independent manner freely and bidirectionally along dsDNA. Initially characterized for its ability to contact the catalytic subunit of DNA polymerase III (Pol III), a complex, multichain enzyme responsible for most of the replicative synthesis in bacteria; Pol III exhibits 3'-5' exonuclease proofreading activity. The beta chain is required for initiation of replication as well as for processivity of DNA replication. The sequence is that of Beta sliding clamp (dnaN) from Caulobacter vibrioides (strain ATCC 19089 / CIP 103742 / CB 15) (Caulobacter crescentus).